The following is an 80-amino-acid chain: Phosphoribosylformylglycinamidine synthase subunit PurS (80 aa).

The protein belongs to the PurS family. As to quaternary structure, homodimer. Part of the FGAM synthase complex composed of 1 PurL, 1 PurQ and 2 PurS subunits.

It is found in the cytoplasm. It carries out the reaction N(2)-formyl-N(1)-(5-phospho-beta-D-ribosyl)glycinamide + L-glutamine + ATP + H2O = 2-formamido-N(1)-(5-O-phospho-beta-D-ribosyl)acetamidine + L-glutamate + ADP + phosphate + H(+). The protein operates within purine metabolism; IMP biosynthesis via de novo pathway; 5-amino-1-(5-phospho-D-ribosyl)imidazole from N(2)-formyl-N(1)-(5-phospho-D-ribosyl)glycinamide: step 1/2. Part of the phosphoribosylformylglycinamidine synthase complex involved in the purines biosynthetic pathway. Catalyzes the ATP-dependent conversion of formylglycinamide ribonucleotide (FGAR) and glutamine to yield formylglycinamidine ribonucleotide (FGAM) and glutamate. The FGAM synthase complex is composed of three subunits. PurQ produces an ammonia molecule by converting glutamine to glutamate. PurL transfers the ammonia molecule to FGAR to form FGAM in an ATP-dependent manner. PurS interacts with PurQ and PurL and is thought to assist in the transfer of the ammonia molecule from PurQ to PurL. The protein is Phosphoribosylformylglycinamidine synthase subunit PurS of Archaeoglobus fulgidus (strain ATCC 49558 / DSM 4304 / JCM 9628 / NBRC 100126 / VC-16).